Here is a 551-residue protein sequence, read N- to C-terminus: Dihydroxy-acid dehydratase (551 aa).

Asp-78 is a binding site for Mg(2+). Cys-119 provides a ligand contact to [2Fe-2S] cluster. Mg(2+) contacts are provided by Asp-120 and Lys-121. Residue Lys-121 is modified to N6-carboxylysine. A [2Fe-2S] cluster-binding site is contributed by Cys-191. Glu-441 contacts Mg(2+). Residue Ser-467 is the Proton acceptor of the active site.

It belongs to the IlvD/Edd family. Homodimer. Requires [2Fe-2S] cluster as cofactor. It depends on Mg(2+) as a cofactor.

The catalysed reaction is (2R)-2,3-dihydroxy-3-methylbutanoate = 3-methyl-2-oxobutanoate + H2O. It carries out the reaction (2R,3R)-2,3-dihydroxy-3-methylpentanoate = (S)-3-methyl-2-oxopentanoate + H2O. The protein operates within amino-acid biosynthesis; L-isoleucine biosynthesis; L-isoleucine from 2-oxobutanoate: step 3/4. It functions in the pathway amino-acid biosynthesis; L-valine biosynthesis; L-valine from pyruvate: step 3/4. Functionally, functions in the biosynthesis of branched-chain amino acids. Catalyzes the dehydration of (2R,3R)-2,3-dihydroxy-3-methylpentanoate (2,3-dihydroxy-3-methylvalerate) into 2-oxo-3-methylpentanoate (2-oxo-3-methylvalerate) and of (2R)-2,3-dihydroxy-3-methylbutanoate (2,3-dihydroxyisovalerate) into 2-oxo-3-methylbutanoate (2-oxoisovalerate), the penultimate precursor to L-isoleucine and L-valine, respectively. In Pyrococcus abyssi (strain GE5 / Orsay), this protein is Dihydroxy-acid dehydratase.